Here is a 351-residue protein sequence, read N- to C-terminus: Anthranilate phosphoribosyltransferase (351 aa).

Residues Gly80, 83–84, Thr88, 90–93, 108–116, and Ser120 contribute to the 5-phospho-alpha-D-ribose 1-diphosphate site; these read GD, NIST, and KHGNRSVTS. Residue Gly80 coordinates anthranilate. Ser92 is a Mg(2+) binding site. Asn111 contributes to the anthranilate binding site. Residue Arg166 participates in anthranilate binding. 2 residues coordinate Mg(2+): Asp229 and Glu230.

Belongs to the anthranilate phosphoribosyltransferase family. As to quaternary structure, homodimer. Mg(2+) serves as cofactor.

The catalysed reaction is N-(5-phospho-beta-D-ribosyl)anthranilate + diphosphate = 5-phospho-alpha-D-ribose 1-diphosphate + anthranilate. It participates in amino-acid biosynthesis; L-tryptophan biosynthesis; L-tryptophan from chorismate: step 2/5. Functionally, catalyzes the transfer of the phosphoribosyl group of 5-phosphorylribose-1-pyrophosphate (PRPP) to anthranilate to yield N-(5'-phosphoribosyl)-anthranilate (PRA). This chain is Anthranilate phosphoribosyltransferase, found in Chlorobium limicola (strain DSM 245 / NBRC 103803 / 6330).